Consider the following 687-residue polypeptide: MTTEDPDSNHLSSETGIKLALDPNLITLALSSNPNSSLHSPTSDEPVPESAGKADTSIRLEGDELENKTKKDNDKNLKFLKNKDSLVSNPHEIYGSMPLEQLIPIILRQRGPGFKFVDLNEKELQNEIKQLGSDSSDGHNSEKKDTDGADENVQIGEDFMEVDYEDKDNPVDSRNETDHKTNENGETDDNIETVMTQEQFVKRRRDMLEHINLAMNESSLALEFVSLLLSSVKESTGMSSMSPFLRKVVKPSSLNSDKIPYVAPTKKEYIELDILNKGWKLQSLNESKDLLRASFNKLSSILQNEHDYWNKIMQSISNKDVIFKIRDRTSGQKLLAIKYGYEDSGSTYKHDRGIANIRNNIESQNLDLIPHSSSVFKGTDFVHSVKKFLRVRIFTKIESEDDYILSGESVMDRDSESEEAETKDIRKQIQLLKKIIFEKELMYQIKKECALLISYGVSIENENKVIIELPNEKFEIELLSLDDDSIVNHEQDLPKINDKRANLMLVMLRLLLVVIFKKTLRSRISSPHGLINLNVDDDILIIRPILGKVRFANYKLLLKKIIKDYVLDIVPGSSITETEVEREQPQENKNIDDENITKLNKEIRAFDKLLNIPRRELKINLPLTEHKSPNLSLMLESPNYCNALIHIKFSAGTEANAVSFDTTFSDFKEVEDFLHFIVAEYIQQKKV.

Low complexity predominate over residues leucine 30–serine 43. 2 disordered regions span residues leucine 30–lysine 70 and glutamine 130–aspartate 189. Composition is skewed to basic and acidic residues over residues threonine 56–lysine 70, serine 136–aspartate 147, and lysine 167–glutamate 183.

The protein belongs to the Mediator complex subunit 17 family. As to quaternary structure, component of the Mediator complex, which is composed of at least 21 subunits that form three structurally distinct submodules. The Mediator head module contains MED6, MED8, MED11, SRB4/MED17, SRB5/MED18, ROX3/MED19, SRB2/MED20 and SRB6/MED22, the middle module contains MED1, MED4, NUT1/MED5, MED7, CSE2/MED9, NUT2/MED10, SRB7/MED21 and SOH1/MED31, and the tail module contains MED2, PGD1/MED3, RGR1/MED14, GAL11/MED15 and SIN4/MED16. The head and the middle modules interact directly with RNA polymerase II, whereas the elongated tail module interacts with gene-specific regulatory proteins. The head module may also interact with the TFIIF complex. SRB4/MED17 interacts directly with MED6, MED11, ROX3/MED19, SRB2/MED20 and SRB6/MED22. Interacts directly with the activator GAL4.

It is found in the nucleus. In terms of biological role, component of the Mediator complex, a coactivator involved in the regulated transcription of nearly all RNA polymerase II-dependent genes. Mediator functions as a bridge to convey information from gene-specific regulatory proteins to the basal RNA polymerase II transcription machinery. The Mediator complex, having a compact conformation in its free form, is recruited to promoters by direct interactions with regulatory proteins and serves for the assembly of a functional preinitiation complex with RNA polymerase II and the general transcription factors. The Mediator complex unfolds to an extended conformation and partially surrounds RNA polymerase II, specifically interacting with the unphosphorylated form of the C-terminal domain (CTD) of RNA polymerase II. The Mediator complex dissociates from the RNA polymerase II holoenzyme and stays at the promoter when transcriptional elongation begins. This chain is Mediator of RNA polymerase II transcription subunit 17 (SRB4), found in Saccharomyces cerevisiae (strain ATCC 204508 / S288c) (Baker's yeast).